Reading from the N-terminus, the 482-residue chain is tRNA sulfurtransferase (482 aa).

The THUMP domain maps to 61–165 (LAIRDALTRI…DDRLLLIKGR (105 aa)). ATP-binding positions include 183–184 (LI), lysine 265, glycine 287, and glutamine 296. A disulfide bridge connects residues cysteine 344 and cysteine 456. The 79-residue stretch at 404–482 (FGANDVILDI…GFANVKVYRP (79 aa)) folds into the Rhodanese domain. Cysteine 456 functions as the Cysteine persulfide intermediate in the catalytic mechanism.

This sequence belongs to the ThiI family.

The protein resides in the cytoplasm. The catalysed reaction is [ThiI sulfur-carrier protein]-S-sulfanyl-L-cysteine + a uridine in tRNA + 2 reduced [2Fe-2S]-[ferredoxin] + ATP + H(+) = [ThiI sulfur-carrier protein]-L-cysteine + a 4-thiouridine in tRNA + 2 oxidized [2Fe-2S]-[ferredoxin] + AMP + diphosphate. The enzyme catalyses [ThiS sulfur-carrier protein]-C-terminal Gly-Gly-AMP + S-sulfanyl-L-cysteinyl-[cysteine desulfurase] + AH2 = [ThiS sulfur-carrier protein]-C-terminal-Gly-aminoethanethioate + L-cysteinyl-[cysteine desulfurase] + A + AMP + 2 H(+). The protein operates within cofactor biosynthesis; thiamine diphosphate biosynthesis. Its function is as follows. Catalyzes the ATP-dependent transfer of a sulfur to tRNA to produce 4-thiouridine in position 8 of tRNAs, which functions as a near-UV photosensor. Also catalyzes the transfer of sulfur to the sulfur carrier protein ThiS, forming ThiS-thiocarboxylate. This is a step in the synthesis of thiazole, in the thiamine biosynthesis pathway. The sulfur is donated as persulfide by IscS. This Salmonella arizonae (strain ATCC BAA-731 / CDC346-86 / RSK2980) protein is tRNA sulfurtransferase.